Reading from the N-terminus, the 326-residue chain is MFRNNQPDQNNNEDENNTNLNSNNNNRTTTTTTTTSSNINSNNNNNNNNNINNNNNNNNNNNNNNNNNNNNNNNNNNNNNNNNNNNNNNNNNNNNNNNNNNNNNRDFIIRTIMQDLRLGIRDIIHPSTLTGLLGGYINALANLDQNQSSSSSSGASGSRSGSSALNSINNNNYSPTTSSLNRVRNQYNQVVRDEEDDDYDNGAEDGFDYDGDDNEDGSDSACESKKKRGRPRKPTPERCSNCKITHSSYWRRITVNGQKLDFCNACGLHQMKRNNRIKESKQRHSIQNIMNQNQEEEEEEREEEEEEEEEEDEEFETLEEEEEDDE.

Disordered regions lie at residues 1–102 (MFRN…NNNN) and 145–238 (QNQS…TPER). Low complexity-rich tracts occupy residues 17 to 102 (NTNL…NNNN) and 148 to 164 (SSSS…GSSA). The span at 165–189 (LNSINNNNYSPTTSSLNRVRNQYNQ) shows a compositional bias: polar residues. The span at 193 to 218 (DEEDDDYDNGAEDGFDYDGDDNEDGS) shows a compositional bias: acidic residues. The GATA-type zinc-finger motif lies at 239-266 (CSNCKITHSSYWRRITVNGQKLDFCNAC). The interval 277–326 (IKESKQRHSIQNIMNQNQEEEEEEREEEEEEEEEEDEEFETLEEEEEDDE) is disordered. Residues 294-326 (QEEEEEEREEEEEEEEEEDEEFETLEEEEEDDE) show a composition bias toward acidic residues.

The chain is GATA zinc finger domain-containing protein 21 (gtaU) from Dictyostelium discoideum (Social amoeba).